The sequence spans 249 residues: Inner membrane protein pE248R (249 aa).

Gly-2 carries the N-myristoyl glycine; by host lipid modification. Residues 2–199 (GGSTSKNSFK…ADAISAVFKN (198 aa)) lie on the Cytoplasmic side of the membrane. A helical transmembrane segment spans residues 200 to 220 (IMVAAVVIVVIIVGFIAVFYF). Residues 221-249 (LHSRHRHEEEEEAEPLITSKILKNAAVSQ) lie on the Extracellular side of the membrane.

It belongs to the asfivirus E248R family. Interacts with A151R.

The protein localises to the host membrane. It is found in the virion membrane. Functionally, essential for viral fusion with host endosomal membrane and core release. The sequence is that of Inner membrane protein pE248R from African swine fever virus (isolate Pig/Kenya/KEN-50/1950) (ASFV).